The chain runs to 478 residues: Alpha-(1,3)-fucosyltransferase FucT (478 aa).

Substrate-binding positions include G94, 186–189 (VASN), R195, 222–225 (VKNK), N240, and 246–250 (YVTEK). Positions 347–353 (DNPFIFC) are important for acceptor specificity. Repeat copies occupy residues 364 to 370 (DDLRVNY), 371 to 377 (DDLRVNY), 378 to 384 (DDLRINY), 385 to 391 (DDLRVNY), 392 to 398 (DDLRINY), 399 to 405 (DDLRVNY), 406 to 412 (DDLRVNY), 413 to 419 (DDLRINY), 420 to 426 (DDLRVNY), and 427 to 433 (DDLRVNY). The tract at residues 364–433 (DDLRVNYDDL…VNYDDLRVNY (70 aa)) is 10 X 7 AA tandem repeat of D-D-L-R-[IV]-N-Y. The interval 434 to 478 (ERLLSKATPLLELSQNTTSKIYRKAYQKSLPLLRAIRRWVKKLGL) is may be involved in membrane binding.

It belongs to the glycosyltransferase 10 family. In terms of assembly, homodimer.

The protein resides in the membrane. Its subcellular location is the cytoplasm. It carries out the reaction a beta-D-galactosyl-(1-&gt;4)-N-acetyl-beta-D-glucosaminyl derivative + GDP-beta-L-fucose = a beta-D-galactosyl-(1-&gt;4)-[alpha-L-fucosyl-(1-&gt;3)]-N-acetyl-beta-D-glucosaminyl derivative + GDP + H(+). It functions in the pathway lipopolysaccharide biosynthesis; LPS oligosaccharide biosynthesis. Functionally, involved in the biosynthesis of the Lewis X (LeX) trisaccharide of the lipopolysaccharide (LPS) O-antigen. Catalyzes the addition of fucose in alpha 1-3 linkage to Gal-beta-1-4-GlcNAc-beta-O-R (LacNAc-R) type II acceptor. The chain is Alpha-(1,3)-fucosyltransferase FucT from Helicobacter pylori (Campylobacter pylori).